The chain runs to 152 residues: Ubiquitin-conjugating enzyme E2 N (152 aa).

The UBC core domain occupies 3–149; that stretch reads GLPRRIIKET…ARAWTRLYAM (147 aa). Residue lysine 82 is modified to N6-acetyllysine. Cysteine 87 serves as the catalytic Glycyl thioester intermediate. Lysine 92 is covalently cross-linked (Glycyl lysine isopeptide (Lys-Gly) (interchain with G-Cter in ISG15)). Serine 131 bears the Phosphoserine mark.

The protein belongs to the ubiquitin-conjugating enzyme family. Heterodimer with UBE2V2. Interacts (UBE2V2-UBE2N heterodimer) with the E3 ligase STUB1 (via the U-box domain); the complex has a specific 'Lys-63'-linked polyubiquitination activity. Interacts with RNF8 and RNF168. Interacts with RNF11. Interacts with the E3 ligases, HLTF and SHPRH; the interactions promote the 'Lys-63'-linked polyubiquitination of PCNA upon genotoxic stress and lead to DNA repair. Interacts with ARIH2 (via RING-type 2). Interacts with OTUB1; leading to inhibit E2-conjugating activity. Interacts with GPS2; leading to inhibit E2-conjugating activity. Interacts with RIGI and RNF135; involved in RIGI ubiquitination and activation. Post-translationally, conjugation to ISG15 impairs formation of the thioester bond with ubiquitin but not interaction with UBE2V2.

The enzyme catalyses S-ubiquitinyl-[E1 ubiquitin-activating enzyme]-L-cysteine + [E2 ubiquitin-conjugating enzyme]-L-cysteine = [E1 ubiquitin-activating enzyme]-L-cysteine + S-ubiquitinyl-[E2 ubiquitin-conjugating enzyme]-L-cysteine.. It functions in the pathway protein modification; protein ubiquitination. Activity is inhibited by binding to OTUB1, which prevents 'Lys-63'-linked polyubiquitination. Activity is inhibited by GPS2, leading to prevent 'Lys-63'-linked polyubiquitination. Functionally, the UBE2V1-UBE2N and UBE2V2-UBE2N heterodimers catalyze the synthesis of non-canonical 'Lys-63'-linked polyubiquitin chains. This type of polyubiquitination does not lead to protein degradation by the proteasome. Mediates transcriptional activation of target genes. Plays a role in the control of progress through the cell cycle and differentiation. Plays a role in the error-free DNA repair pathway and contributes to the survival of cells after DNA damage. Acts together with the E3 ligases, HLTF and SHPRH, in the 'Lys-63'-linked poly-ubiquitination of PCNA upon genotoxic stress, which is required for DNA repair. Appears to act together with E3 ligase RNF5 in the 'Lys-63'-linked polyubiquitination of JKAMP thereby regulating JKAMP function by decreasing its association with components of the proteasome and ERAD. Promotes TRIM5 capsid-specific restriction activity and the UBE2V1-UBE2N heterodimer acts in concert with TRIM5 to generate 'Lys-63'-linked polyubiquitin chains which activate the MAP3K7/TAK1 complex which in turn results in the induction and expression of NF-kappa-B and MAPK-responsive inflammatory genes. Together with RNF135 and UB2V1, catalyzes the viral RNA-dependent 'Lys-63'-linked polyubiquitination of RIGI to activate the downstream signaling pathway that leads to interferon beta production. UBE2V1-UBE2N together with TRAF3IP2 E3 ubiquitin ligase mediate 'Lys-63'-linked polyubiquitination of TRAF6, a component of IL17A-mediated signaling pathway. The polypeptide is Ubiquitin-conjugating enzyme E2 N (Ube2n) (Rattus norvegicus (Rat)).